Consider the following 369-residue polypeptide: Probable serine/threonine-protein kinase FMP48 (369 aa).

Residues 2–369 (YTKLRSIQSG…EKPCLIQDGK (368 aa)) enclose the Protein kinase domain. ATP is bound by residues 8–16 (IQSGTFSTV) and Lys-31. Residue Asp-133 is the Proton acceptor of the active site.

Belongs to the protein kinase superfamily. Ser/Thr protein kinase family.

It is found in the mitochondrion. The enzyme catalyses L-seryl-[protein] + ATP = O-phospho-L-seryl-[protein] + ADP + H(+). The catalysed reaction is L-threonyl-[protein] + ATP = O-phospho-L-threonyl-[protein] + ADP + H(+). The protein is Probable serine/threonine-protein kinase FMP48 (FMP48) of Saccharomyces cerevisiae (strain ATCC 204508 / S288c) (Baker's yeast).